The sequence spans 149 residues: Probable flagellum biosynthesis repressor protein FlbT (149 aa).

It belongs to the FlbT family.

Its function is as follows. Has a post-transcriptional repressor function in flagellum biogenesis. Associates with the 5'-UTR of fljK mRNA and promotes its degradation. The chain is Probable flagellum biosynthesis repressor protein FlbT from Sinorhizobium medicae (strain WSM419) (Ensifer medicae).